The following is a 155-amino-acid chain: Secreted RxLR effector protein RXLR-C301 (155 aa).

The N-terminal stretch at 1–24 (MRLYALSVSLLAAITLLACVIASA) is a signal peptide. Residues 34–64 (RRLSQDVSETEITELSESKKPTAQDIDNEER) carry the RxLR-dEER motif.

The protein belongs to the RxLR effector family.

It is found in the secreted. Its subcellular location is the host cell membrane. Its function is as follows. Secreted effector that does not suppress pattern-triggered immunity (PTI) in plant host. In Plasmopara halstedii (Downy mildew of sunflower), this protein is Secreted RxLR effector protein RXLR-C301.